A 1409-amino-acid chain; its full sequence is DNA-directed RNA polymerase subunit beta' (1409 aa).

4 residues coordinate Zn(2+): C70, C72, C85, and C88. Residues D460, D462, and D464 each contribute to the Mg(2+) site. C822, C896, C903, and C906 together coordinate Zn(2+).

Belongs to the RNA polymerase beta' chain family. As to quaternary structure, the RNAP catalytic core consists of 2 alpha, 1 beta, 1 beta' and 1 omega subunit. When a sigma factor is associated with the core the holoenzyme is formed, which can initiate transcription. Mg(2+) is required as a cofactor. Zn(2+) serves as cofactor.

The enzyme catalyses RNA(n) + a ribonucleoside 5'-triphosphate = RNA(n+1) + diphosphate. Its function is as follows. DNA-dependent RNA polymerase catalyzes the transcription of DNA into RNA using the four ribonucleoside triphosphates as substrates. The protein is DNA-directed RNA polymerase subunit beta' of Methylobacillus flagellatus (strain ATCC 51484 / DSM 6875 / VKM B-1610 / KT).